A 551-amino-acid polypeptide reads, in one-letter code: MQGVTRASILLIIYHLFTLSLGQLHGEKGISVPEHGFCQPISIPLCTDIAYNQTIMPNLLGHTNQEDAGLEVHQFYPLVKVQCSSELRFFLCSMYAPVCTVLEQAIPPCRSICERARHGCEALMNKFGFQWPERLRCENFPRHGAEQICVGQNHSEDGGPTLLTTSPPHHGTPGPPIYATLDHPFHCPRVLKVPSYLNYRFLGEKDCAAPCEPTKSDGFMFFSQDEIRFARIWILIWSVLCCASTFITVTTYLVDMQRFRYPERPIIFLSGCYTMVSVAYIAGFVLGDKVVCNEGFSEDGYKTVVQGTKKEGCTILFMMLYFFSMASSIWWVILSLTWFLAAGMKWGHEAIEANSQYFHLAAWAVPAVKTITILAMGQIDGDLLSGVCFVGLNNIDPLRGFVLAPLFVYLFIGTSFLLAGFVSLFRIRTIMKHDGTKTEKLERLMVRIGVFSVLYTVPATIVIACYFYEQAFREHWERSWVSQNCKSLAIPCPLQYTPRMTPDFTVYMIKYLMTLIVGITSGFWIWSGKTLHSWRKFYTRLTNSKHGETTV.

The N-terminal stretch at 1-26 (MQGVTRASILLIIYHLFTLSLGQLHG) is a signal peptide. The Extracellular portion of the chain corresponds to 27 to 231 (EKGISVPEHG…FSQDEIRFAR (205 aa)). In terms of domain architecture, FZ spans 33-152 (PEHGFCQPIS…HGAEQICVGQ (120 aa)). 5 disulfide bridges follow: Cys-38–Cys-99, Cys-46–Cys-92, Cys-83–Cys-120, Cys-109–Cys-149, and Cys-113–Cys-137. Asn-52 carries an N-linked (GlcNAc...) asparagine glycan. Asn-153 is a glycosylation site (N-linked (GlcNAc...) asparagine). Residues 232-252 (IWILIWSVLCCASTFITVTTY) traverse the membrane as a helical segment. At 253–265 (LVDMQRFRYPERP) the chain is on the cytoplasmic side. A helical membrane pass occupies residues 266–286 (IIFLSGCYTMVSVAYIAGFVL). Over 287-313 (GDKVVCNEGFSEDGYKTVVQGTKKEGC) the chain is Extracellular. A helical transmembrane segment spans residues 314-334 (TILFMMLYFFSMASSIWWVIL). At 335–356 (SLTWFLAAGMKWGHEAIEANSQ) the chain is on the cytoplasmic side. A helical transmembrane segment spans residues 357 to 377 (YFHLAAWAVPAVKTITILAMG). Residues 378-400 (QIDGDLLSGVCFVGLNNIDPLRG) are Extracellular-facing. Residues 401–421 (FVLAPLFVYLFIGTSFLLAGF) traverse the membrane as a helical segment. The Cytoplasmic portion of the chain corresponds to 422–447 (VSLFRIRTIMKHDGTKTEKLERLMVR). The chain crosses the membrane as a helical span at residues 448–468 (IGVFSVLYTVPATIVIACYFY). At 469–505 (EQAFREHWERSWVSQNCKSLAIPCPLQYTPRMTPDFT) the chain is on the extracellular side. Residues 506 to 526 (VYMIKYLMTLIVGITSGFWIW) form a helical membrane-spanning segment. Topologically, residues 527-534 (SGKTLHSW) are cytoplasmic. A Lys-Thr-X-X-X-Trp motif, mediates interaction with the PDZ domain of Dvl family members motif is present at residues 529–534 (KTLHSW). A PDZ-binding motif is present at residues 549-551 (TTV).

Belongs to the G-protein coupled receptor Fz/Smo family. Widely expressed, especially in the eye anlage, otic vesicle and developing somites.

The protein localises to the membrane. Its subcellular location is the cell membrane. Its function is as follows. Receptor for Wnt proteins. Most of frizzled receptors are coupled to the beta-catenin canonical signaling pathway, which leads to the activation of disheveled proteins, inhibition of GSK-3 kinase, nuclear accumulation of beta-catenin and activation of Wnt target genes. A second signaling pathway involving PKC and calcium fluxes has been seen for some family members, but it is not yet clear if it represents a distinct pathway or if it can be integrated in the canonical pathway, as PKC seems to be required for Wnt-mediated inactivation of GSK-3 kinase. Both pathways seem to involve interactions with G-proteins. May be involved in transduction and intercellular transmission of polarity information during tissue morphogenesis and/or in differentiated tissues. The chain is Frizzled-2 (fzd2) from Xenopus laevis (African clawed frog).